We begin with the raw amino-acid sequence, 76 residues long: Large ribosomal subunit protein eL29 (76 aa).

A compositionally biased stretch (basic residues) spans 1–29 (MAKSKNHTNHNQNKKAHRNGIKRPLRKRH). Disordered stretches follow at residues 1-33 (MAKS…ESTL) and 47-76 (RKGN…PVTL). At Ser31 the chain carries Phosphoserine. Residues 51-62 (LSREESVKRYNE) are compositionally biased toward basic and acidic residues.

It belongs to the eukaryotic ribosomal protein eL29 family.

This Drosophila melanogaster (Fruit fly) protein is Large ribosomal subunit protein eL29 (RpL29).